Consider the following 108-residue polypeptide: Glutaredoxin-1 (108 aa).

A Glutaredoxin domain is found at 3–106; that stretch reads EEFVQQRLAN…DILSSIGVLR (104 aa). Cys23 and Cys26 are oxidised to a cystine.

This sequence belongs to the glutaredoxin family.

It localises to the virion. Its function is as follows. Has thioltransferase and dehydroascorbate reductase activities. This Camelpox virus (strain M-96) protein is Glutaredoxin-1 (OPG075).